Here is a 176-residue protein sequence, read N- to C-terminus: Inner membrane-spanning protein YciB (176 aa).

The next 5 helical transmembrane spans lie at 24 to 44 (TATA…AFRH), 49 to 69 (PMLW…LVLH), 76 to 96 (WKPT…QLAF), 119 to 139 (LSVV…FVAY), and 149 to 169 (FKLF…SLWL).

The protein belongs to the YciB family.

It localises to the cell inner membrane. Functionally, plays a role in cell envelope biogenesis, maintenance of cell envelope integrity and membrane homeostasis. This chain is Inner membrane-spanning protein YciB, found in Paraburkholderia phytofirmans (strain DSM 17436 / LMG 22146 / PsJN) (Burkholderia phytofirmans).